The chain runs to 896 residues: Protein translocase subunit SecA (896 aa).

ATP contacts are provided by residues Gln87, 105-109 (GEGKT), and Asp512. Residues 858-886 (RAGGEAEAAKPVVRDEKKVGRNDPCPCGS) are disordered. Residues 869-878 (VVRDEKKVGR) are compositionally biased toward basic and acidic residues. Residues Cys882, Cys884, Cys893, and Cys894 each coordinate Zn(2+).

Belongs to the SecA family. In terms of assembly, monomer and homodimer. Part of the essential Sec protein translocation apparatus which comprises SecA, SecYEG and auxiliary proteins SecDF-YajC and YidC. Zn(2+) serves as cofactor.

The protein resides in the cell inner membrane. Its subcellular location is the cytoplasm. It catalyses the reaction ATP + H2O + cellular proteinSide 1 = ADP + phosphate + cellular proteinSide 2.. Part of the Sec protein translocase complex. Interacts with the SecYEG preprotein conducting channel. Has a central role in coupling the hydrolysis of ATP to the transfer of proteins into and across the cell membrane, serving as an ATP-driven molecular motor driving the stepwise translocation of polypeptide chains across the membrane. This Syntrophotalea carbinolica (strain DSM 2380 / NBRC 103641 / GraBd1) (Pelobacter carbinolicus) protein is Protein translocase subunit SecA.